The following is a 695-amino-acid chain: N-terminal acetyltransferase A complex subunit-like protein C418.02 (695 aa).

10 TPR repeats span residues 8-41, 43-75, 76-109, 111-143, 145-177, 217-250, 262-296, 365-398, 399-432, and 477-510; these read EAFLFDRSIDQFEKGQYSKSLKTIQSVLKKKPKH, DSVALLGLNLCKLHDSRSALLKCGYASSIDPKS, QFCWHALAIVYRETKDYNNSLKCYQNALAISPNN, SLWYDAAYLQAQLGLYQPLFDNWNRLLQLDSSN, EYRLCFTLSAFLSGNYKESLEQIQYLISSCNLS, FNFEHIKADFAFRQKNYEESIYLYARLLIKFPNR, WNFYKSGGLALDLLLKRTDSLIKTFSEILQTGISV, LWCTYCLCLAHYKLGDYEESNYWLNLAIDHTPTY, PELFLAKAKIFLCMGEIEEALCSFKRSVELDKSD, and VWFLVEDGESLLRQKLYGLALKRFHSIYQIYKKW.

Component of the N-terminal acetyltransferase A (NatA) complex.

Its subcellular location is the cytoplasm. The protein resides in the nucleus. In terms of biological role, non-catalytic component of the NatA N-terminal acetyltransferase, which catalyzes acetylation of proteins beginning with Met-Ser, Met-Gly and Met-Ala. N-acetylation plays a role in normal eukaryotic translation and processing, protect against proteolytic degradation and protein turnover. The protein is N-terminal acetyltransferase A complex subunit-like protein C418.02 of Schizosaccharomyces pombe (strain 972 / ATCC 24843) (Fission yeast).